Reading from the N-terminus, the 174-residue chain is Non-classical export protein 2 homolog 1 (174 aa).

At 1–7 (MLSAADN) the chain is on the cytoplasmic side. The chain crosses the membrane as a helical span at residues 8 to 28 (LVRIINAVFLIISIGLISGLI). The Extracellular segment spans residues 29 to 41 (GTQTKHSSRVNFC). The chain crosses the membrane as a helical span at residues 42–62 (MFAAVYGLVTDSLYGFLANFW). The Cytoplasmic segment spans residues 63–69 (TSLTYPA). The helical transmembrane segment at 70–90 (ILLVLDFLNFIFTFVAATALA) threads the bilayer. Over 91–122 (VGIRCHSCKNKTYLEQNKIIQGSSSRCHQSQA) the chain is Extracellular. The chain crosses the membrane as a helical span at residues 123 to 143 (AVAFFYFSCFLFLIKVTVATM). The Cytoplasmic portion of the chain corresponds to 144–174 (GMMQNGGFGSNTGFSRRRARRQMGIPTISQV).

The protein belongs to the NCE102 family.

It is found in the cell membrane. Functionally, involved in membrane organization. Required for the formation of membrane compartments of CAN1 (MCCs), localization of CAN1 at the MCCs and subsequent invagination of the plasma membrane at the MCCs sites. Involved in eisosome organization and might act as a sensor of sphingolipids that regulates plasma membrane function. Involved in a novel pathway of export of proteins that lack a cleavable signal sequence. Non-classical export pathway also functions as an alternative clearance/detoxification pathway to eliminate damaged material, when the basic repair pathway is not sufficient. This Saccharomyces cerevisiae (strain ATCC 204508 / S288c) (Baker's yeast) protein is Non-classical export protein 2 homolog 1 (FHN1).